The following is a 601-amino-acid chain: Putative purine permease C1399.01c (601 aa).

The next 12 helical transmembrane spans lie at 64–84 (VPVL…VGGV), 102–122 (TNYL…IQIA), 131–151 (YYIG…VSVA), 179–199 (YGAF…MSFI), 207–227 (LFPP…LISS), 264–284 (GWGS…IIII), 294–314 (TTSV…TGYW), 337–357 (IYGP…MEAI), 424–444 (FFCA…AVFV), 450–470 (VLGG…IAII), 481–501 (FILT…DWFT), and 522–542 (LVME…NLIL).

Belongs to the nucleobase:cation symporter-2 (NCS2) (TC 2.A.40) family.

The protein localises to the vacuole membrane. This chain is Putative purine permease C1399.01c, found in Schizosaccharomyces pombe (strain 972 / ATCC 24843) (Fission yeast).